The chain runs to 419 residues: Transcription factor IIIB 50 kDa subunit (419 aa).

Residues 2–36 form a TFIIB-type zinc finger; sequence PGRGRCPDCGSTELVEDSHYSQSQLVCSDCGCVVT. 4 residues coordinate Zn(2+): cysteine 7, cysteine 10, cysteine 28, and cysteine 31. Tandem repeats lie at residues 72–157 and 173–249. The tract at residues 108-114 is interaction with target DNA; sequence AARLQKK. Basic and acidic residues predominate over residues 314–326; it reads DGTAEVETREKEP. The tract at residues 314–351 is disordered; that stretch reads DGTAEVETREKEPPGWGQGQGEGEVGNNSLGLPQGKRP. A Phosphoserine modification is found at serine 353. A required for the formation of a ternary complex with DNA and TBP; not required for interaction with TBP in the absence of DNA region spans residues 357–363; that stretch reads LLPPCML. Cysteine 361 is modified (cysteine sulfenic acid (-SOH)). Positions 365–419 are required for interaction with TBP and formation of a ternary complex with DNA and TBP; that stretch reads SPKRICPVPPVSTVTGDENISDSEIEQYLRTPQEVRDFQRAQAARQAATSVPNPP.

The protein belongs to the TFIIB family. In terms of assembly, component of TFIIIB complexes. The TFIIIB complex has two activities, alpha and beta. The TFIIIB-alpha activity complex is composed of TBP, BDP1, and a complex containing both BRF2 and at least four stably associated proteins; this complex inhibits the transcription by pol III via its phosphorylation by CK2; YY1 facilitates the TFIIIB-alpha complex formation. Interacts with TBP; this interaction promotes recruitment of BRF2 to TATA box-containing promoters. Interacts with TBP and the BURE sequence (GC-rich sequence downstream from the TATA box) to form a strong ternary complex which is joined by BDP1; this ternary complex stimulates pol III transcription. Forms a trimeric complex composed of TBP, BRF2 and mini-SNAPc complex (SNAP43, SNAP50, and the N-terminal third of SNAP190) on the promoter. Assembly of the TBP-BRF2 complex is stimulated by SNAP190. Interacts with MAF1 and SNAPC4. Post-translationally, in response to oxidative stress, Cys-361 is reversibly oxidized to cysteine sulfenic acid. Oxidation of Cys-361 impairs formation of a ternary complex with TBP and DNA and down-regulates expression of target genes in response to oxidative stress.

Its subcellular location is the nucleus. Functionally, general activator of RNA polymerase III transcription. Factor exclusively required for RNA polymerase III transcription of genes with promoter elements upstream of the initiation sites. Contributes to the regulation of gene expression; functions as activator in the absence of oxidative stress. Down-regulates expression of target genes in response to oxidative stress. Overexpression protects cells against apoptosis in response to oxidative stress. The sequence is that of Transcription factor IIIB 50 kDa subunit (BRF2) from Homo sapiens (Human).